A 126-amino-acid chain; its full sequence is Phosphoribosyl-AMP cyclohydrolase (126 aa).

Position 77 (aspartate 77) interacts with Mg(2+). Cysteine 78 serves as a coordination point for Zn(2+). The Mg(2+) site is built by aspartate 79 and aspartate 81. Zn(2+) contacts are provided by cysteine 95 and cysteine 102.

It belongs to the PRA-CH family. In terms of assembly, homodimer. The cofactor is Mg(2+). Requires Zn(2+) as cofactor.

It is found in the cytoplasm. It carries out the reaction 1-(5-phospho-beta-D-ribosyl)-5'-AMP + H2O = 1-(5-phospho-beta-D-ribosyl)-5-[(5-phospho-beta-D-ribosylamino)methylideneamino]imidazole-4-carboxamide. It functions in the pathway amino-acid biosynthesis; L-histidine biosynthesis; L-histidine from 5-phospho-alpha-D-ribose 1-diphosphate: step 3/9. Its function is as follows. Catalyzes the hydrolysis of the adenine ring of phosphoribosyl-AMP. In Cellvibrio japonicus (strain Ueda107) (Pseudomonas fluorescens subsp. cellulosa), this protein is Phosphoribosyl-AMP cyclohydrolase.